The sequence spans 78 residues: Small ribosomal subunit protein bS16 (78 aa).

Belongs to the bacterial ribosomal protein bS16 family.

This Maridesulfovibrio salexigens (strain ATCC 14822 / DSM 2638 / NCIMB 8403 / VKM B-1763) (Desulfovibrio salexigens) protein is Small ribosomal subunit protein bS16.